Reading from the N-terminus, the 139-residue chain is D-ribose pyranase (139 aa).

His20 (proton donor) is an active-site residue. Substrate is bound by residues Asp28, His106, and 128-130 (YAN).

It belongs to the RbsD / FucU family. RbsD subfamily. As to quaternary structure, homodecamer.

It localises to the cytoplasm. The catalysed reaction is beta-D-ribopyranose = beta-D-ribofuranose. It participates in carbohydrate metabolism; D-ribose degradation; D-ribose 5-phosphate from beta-D-ribopyranose: step 1/2. Catalyzes the interconversion of beta-pyran and beta-furan forms of D-ribose. This Proteus mirabilis (strain HI4320) protein is D-ribose pyranase.